The chain runs to 40 residues: Photosystem II reaction center protein J (40 aa).

A helical membrane pass occupies residues 8–28; it reads IPLWVIGTVAGILVIGLIGIF.

This sequence belongs to the PsbJ family. PSII is composed of 1 copy each of membrane proteins PsbA, PsbB, PsbC, PsbD, PsbE, PsbF, PsbH, PsbI, PsbJ, PsbK, PsbL, PsbM, PsbT, PsbX, PsbY, PsbZ, Psb30/Ycf12, at least 3 peripheral proteins of the oxygen-evolving complex and a large number of cofactors. It forms dimeric complexes.

The protein localises to the plastid. Its subcellular location is the chloroplast thylakoid membrane. One of the components of the core complex of photosystem II (PSII). PSII is a light-driven water:plastoquinone oxidoreductase that uses light energy to abstract electrons from H(2)O, generating O(2) and a proton gradient subsequently used for ATP formation. It consists of a core antenna complex that captures photons, and an electron transfer chain that converts photonic excitation into a charge separation. The protein is Photosystem II reaction center protein J of Lepidium virginicum (Virginia pepperweed).